Here is a 231-residue protein sequence, read N- to C-terminus: Ribosomal RNA small subunit methyltransferase G (231 aa).

Residues Gly-75, Gly-125–Glu-126, and Arg-140 each bind S-adenosyl-L-methionine. The segment covering Ala-204–Glu-213 has biased composition (acidic residues). The tract at residues Ala-204–Gly-231 is disordered.

Belongs to the methyltransferase superfamily. RNA methyltransferase RsmG family.

The protein resides in the cytoplasm. Functionally, specifically methylates the N7 position of a guanine in 16S rRNA. The polypeptide is Ribosomal RNA small subunit methyltransferase G (Rhodopirellula baltica (strain DSM 10527 / NCIMB 13988 / SH1)).